The sequence spans 270 residues: Eukaryotic translation initiation factor 3 subunit G-1 (270 aa).

Residues 189–267 (AAIRISNLSE…LILSVEWSKP (79 aa)) form the RRM domain.

The protein belongs to the eIF-3 subunit G family. As to quaternary structure, component of the eukaryotic translation initiation factor 3 (eIF-3) complex. The eIF-3 complex interacts with pix.

It localises to the cytoplasm. Its function is as follows. RNA-binding component of the eukaryotic translation initiation factor 3 (eIF-3) complex, which is involved in protein synthesis of a specialized repertoire of mRNAs and, together with other initiation factors, stimulates binding of mRNA and methionyl-tRNAi to the 40S ribosome. The eIF-3 complex specifically targets and initiates translation of a subset of mRNAs involved in cell proliferation. This subunit can bind 18S rRNA. This chain is Eukaryotic translation initiation factor 3 subunit G-1, found in Drosophila ananassae (Fruit fly).